A 205-amino-acid chain; its full sequence is Small ribosomal subunit protein uS4 (205 aa).

The disordered stretch occupies residues 25-48; that stretch reads KTIEARPTPPGQHGAKNTRRKKSD. The S4 RNA-binding domain maps to 94 to 157; that stretch reads RRLDNVVFRA…TKLPIVVETL (64 aa).

The protein belongs to the universal ribosomal protein uS4 family. In terms of assembly, part of the 30S ribosomal subunit. Contacts protein S5. The interaction surface between S4 and S5 is involved in control of translational fidelity.

In terms of biological role, one of the primary rRNA binding proteins, it binds directly to 16S rRNA where it nucleates assembly of the body of the 30S subunit. With S5 and S12 plays an important role in translational accuracy. This is Small ribosomal subunit protein uS4 from Methylobacillus flagellatus (strain ATCC 51484 / DSM 6875 / VKM B-1610 / KT).